Consider the following 80-residue polypeptide: Translation initiation factor IF-1 (80 aa).

Positions 6–80 constitute an S1-like domain; sequence RKQEHEKERG…LTRGRIVYRL (75 aa).

It belongs to the IF-1 family. In terms of assembly, component of the 30S ribosomal translation pre-initiation complex which assembles on the 30S ribosome in the order IF-2 and IF-3, IF-1 and N-formylmethionyl-tRNA(fMet); mRNA recruitment can occur at any time during PIC assembly.

It is found in the cytoplasm. Functionally, one of the essential components for the initiation of protein synthesis. Stabilizes the binding of IF-2 and IF-3 on the 30S subunit to which N-formylmethionyl-tRNA(fMet) subsequently binds. Helps modulate mRNA selection, yielding the 30S pre-initiation complex (PIC). Upon addition of the 50S ribosomal subunit IF-1, IF-2 and IF-3 are released leaving the mature 70S translation initiation complex. This Aquifex aeolicus (strain VF5) protein is Translation initiation factor IF-1.